We begin with the raw amino-acid sequence, 424 residues long: Serine--tRNA ligase (424 aa).

Position 230 to 232 (230 to 232 (TAE)) interacts with L-serine. 261 to 263 (RAE) contacts ATP. Residue E284 coordinates L-serine. 348 to 351 (EISS) is a binding site for ATP. Position 384 (S384) interacts with L-serine.

This sequence belongs to the class-II aminoacyl-tRNA synthetase family. Type-1 seryl-tRNA synthetase subfamily. Homodimer. The tRNA molecule binds across the dimer.

It is found in the cytoplasm. The catalysed reaction is tRNA(Ser) + L-serine + ATP = L-seryl-tRNA(Ser) + AMP + diphosphate + H(+). The enzyme catalyses tRNA(Sec) + L-serine + ATP = L-seryl-tRNA(Sec) + AMP + diphosphate + H(+). Its pathway is aminoacyl-tRNA biosynthesis; selenocysteinyl-tRNA(Sec) biosynthesis; L-seryl-tRNA(Sec) from L-serine and tRNA(Sec): step 1/1. Functionally, catalyzes the attachment of serine to tRNA(Ser). Is also able to aminoacylate tRNA(Sec) with serine, to form the misacylated tRNA L-seryl-tRNA(Sec), which will be further converted into selenocysteinyl-tRNA(Sec). This chain is Serine--tRNA ligase, found in Desulforamulus reducens (strain ATCC BAA-1160 / DSM 100696 / MI-1) (Desulfotomaculum reducens).